The chain runs to 226 residues: 7-cyano-7-deazaguanine synthase (226 aa).

9 to 19 contributes to the ATP binding site; it reads LSGGLDSTVAT. Zn(2+) is bound by residues C192, C200, C203, and C206.

The protein belongs to the QueC family. Zn(2+) is required as a cofactor.

The enzyme catalyses 7-carboxy-7-deazaguanine + NH4(+) + ATP = 7-cyano-7-deazaguanine + ADP + phosphate + H2O + H(+). Its pathway is purine metabolism; 7-cyano-7-deazaguanine biosynthesis. Functionally, catalyzes the ATP-dependent conversion of 7-carboxy-7-deazaguanine (CDG) to 7-cyano-7-deazaguanine (preQ(0)). This is 7-cyano-7-deazaguanine synthase from Methanosphaera stadtmanae (strain ATCC 43021 / DSM 3091 / JCM 11832 / MCB-3).